Consider the following 362-residue polypeptide: UDP-N-acetylglucosamine--N-acetylmuramyl-(pentapeptide) pyrophosphoryl-undecaprenol N-acetylglucosamine transferase (362 aa).

Residues 10 to 12 (TAG), N124, R161, S195, and Q291 contribute to the UDP-N-acetyl-alpha-D-glucosamine site.

This sequence belongs to the glycosyltransferase 28 family. MurG subfamily.

Its subcellular location is the cell membrane. It carries out the reaction di-trans,octa-cis-undecaprenyl diphospho-N-acetyl-alpha-D-muramoyl-L-alanyl-D-glutamyl-meso-2,6-diaminopimeloyl-D-alanyl-D-alanine + UDP-N-acetyl-alpha-D-glucosamine = di-trans,octa-cis-undecaprenyl diphospho-[N-acetyl-alpha-D-glucosaminyl-(1-&gt;4)]-N-acetyl-alpha-D-muramoyl-L-alanyl-D-glutamyl-meso-2,6-diaminopimeloyl-D-alanyl-D-alanine + UDP + H(+). It participates in cell wall biogenesis; peptidoglycan biosynthesis. Its function is as follows. Cell wall formation. Catalyzes the transfer of a GlcNAc subunit on undecaprenyl-pyrophosphoryl-MurNAc-pentapeptide (lipid intermediate I) to form undecaprenyl-pyrophosphoryl-MurNAc-(pentapeptide)GlcNAc (lipid intermediate II). In Streptomyces collinus, this protein is UDP-N-acetylglucosamine--N-acetylmuramyl-(pentapeptide) pyrophosphoryl-undecaprenol N-acetylglucosamine transferase.